A 141-amino-acid chain; its full sequence is Hemoglobin subunit alpha-D (141 aa).

The Globin domain occupies 1 to 141; the sequence is VLTHEDCELL…VGDMLAEKYR (141 aa). The heme b site is built by His-58 and His-87.

This sequence belongs to the globin family. As to quaternary structure, there are three forms of hemoglobin in Sphenodon: A, A' and D. Hb A is a tetramer of two alpha-A and two beta-1, Hb A' is a tetramer of two alpha-a and two beta-2, Hb D is a tetramer of two alpha-D and two beta-2. In terms of tissue distribution, red blood cells.

Its function is as follows. Involved in oxygen transport from the lung to the various peripheral tissues. The protein is Hemoglobin subunit alpha-D (HBAD) of Sphenodon punctatus (Tuatara).